The sequence spans 305 residues: Dihydroorotate dehydrogenase B (NAD(+)), catalytic subunit (305 aa).

Residues Ser23 and 47 to 48 each bind FMN; that span reads KG. Residues Lys47 and 71–75 each bind substrate; that span reads NAIGL. Positions 101 and 129 each coordinate FMN. Asn129 is a binding site for substrate. Residue Cys132 is the Nucleophile of the active site. Lys167 and Ile193 together coordinate FMN. 194–195 contributes to the substrate binding site; it reads NT. FMN contacts are provided by residues Gly219, 245–246, and 267–268; these read GG and GT.

It belongs to the dihydroorotate dehydrogenase family. Type 1 subfamily. Heterotetramer of 2 PyrK and 2 PyrD type B subunits. The cofactor is FMN.

It is found in the cytoplasm. The catalysed reaction is (S)-dihydroorotate + NAD(+) = orotate + NADH + H(+). It functions in the pathway pyrimidine metabolism; UMP biosynthesis via de novo pathway; orotate from (S)-dihydroorotate (NAD(+) route): step 1/1. Functionally, catalyzes the conversion of dihydroorotate to orotate with NAD(+) as electron acceptor. The sequence is that of Dihydroorotate dehydrogenase B (NAD(+)), catalytic subunit (pyrD) from Geobacter sulfurreducens (strain ATCC 51573 / DSM 12127 / PCA).